Here is a 321-residue protein sequence, read N- to C-terminus: Chitinase-like protein 1 (321 aa).

The signal sequence occupies residues 1 to 26 (MVTIRSGSIVILVLLAVSFLALVANG). An intrachain disulfide couples C42 to C55. N-linked (GlcNAc...) asparagine glycosylation is present at N57. C157 and C167 are joined by a disulfide. Residues N208 and N244 are each glycosylated (N-linked (GlcNAc...) asparagine). A disulfide bridge links C267 with C304. A disordered region spans residues 297–321 (GPNDELSCAEQKPFNPSTVPSSSSS). Polar residues predominate over residues 310 to 321 (FNPSTVPSSSSS).

The protein belongs to the glycosyl hydrolase 19 family. In terms of tissue distribution, mostly expressed in seedlings shoots and roots, stems, and flowers, and, to a lower extent, in flowers, mature leaves and roots.

It localises to the secreted. Its function is as follows. No chitinase activity. Essential for normal plant growth and development. Regulates cell expansion extent and differentiation at least in roots and hypocotyls. Prevents lignin accumulation in the pith. May modulate ethylene-mediated regulation during development. Probably required to establish thermotolerance acclimation. Plays a role for controlled anisotropic cell expansion in the regulation of waving during root gravitropism and thigmotropism. Involved in the root system architecture adaptation to multiple environmental conditions such as nitrate. Contributes to salt tolerance and possibly to drought by preventing the overaccumulation of sodium ions. The protein is Chitinase-like protein 1 (CTL1) of Arabidopsis thaliana (Mouse-ear cress).